We begin with the raw amino-acid sequence, 157 residues long: uncharacterized protein (157 aa).

It belongs to the MG067/MG068/MG395 family.

This is an uncharacterized protein from Mycoplasma pneumoniae (strain ATCC 29342 / M129 / Subtype 1) (Mycoplasmoides pneumoniae).